The primary structure comprises 451 residues: Prenyltransferase asqH1 (451 aa).

Positions 14–37 (AEDQSTRKVHWGQEGSGQSPEARP) are disordered. E120 is an L-tryptophan binding site. Substrate is bound by residues R137, R274, K276, Y278, and Y373.

Belongs to the tryptophan dimethylallyltransferase family.

It carries out the reaction quinolinone B + dimethylallyl diphosphate = peniprequinolone + diphosphate. It participates in secondary metabolite biosynthesis. It functions in the pathway alkaloid biosynthesis. Its pathway is mycotoxin biosynthesis. In terms of biological role, prenyltransferase; part of the gene cluster that mediates the biosynthesis of the aspoquinolone mycotoxins. Within the pathway, the prenyltransferase asqH1 catalyzes the canonical Friedel-Crafts alkylation of quinolinone B with dimethylallyl cation to yield dimethylallyl quinolone. The first step of the pathway is catalyzed by the nonribosomal peptide synthetase asqK that condenses anthranilic acid and O-methyl-L-tyrosine to produce 4'-methoxycyclopeptin. 4'-methoxycyclopeptin is then converted to 4'-methoxydehydrocyclopeptin by the ketoglutarate-dependent dioxygenase asqJ. AsqJ also converts its first product 4'-methoxydehydrocyclopeptin to 4'-methoxycyclopenin. The following conversion of 4'-methoxycyclopenin into 4'-methoxyviridicatin is catalyzed by the cyclopenase asqI. 4'-methoxyviridicatin is the precursor of quinolone natural products, and is further converted to quinolinone B. The prenyltransferase asqH1 then catalyzes the canonical Friedel-Crafts alkylation of quinolinone B with dimethylallyl cation to yield dimethylallyl quinolone, which is subjected to FAD-dependent dehydrogenation by the FAD-linked oxidoreductase asqF to yield conjugated aryl diene. The delta(3') double bond then serves as the site of the second alkylation with DMAPP catalyzed by the prenyltransferase asqH2 to yield a carbenium ion intermediate, which can be attacked by H(2)O to yield a styrenyl quinolone containing a C3'-hydroxyprenyl chain. The FAD-dependent monooxygenase asqG performs epoxidation of the terminal C7'-C8' olefin. Finally, after dehydratation of the epoxide at C3 by asqC, the quinolone epoxide rearrangement protein asqO catalyzes an enzymatic 3-exo-tet cyclization to yield the cyclopropyl-THF ring system in aspoquinolone. This chain is Prenyltransferase asqH1, found in Emericella nidulans (strain FGSC A4 / ATCC 38163 / CBS 112.46 / NRRL 194 / M139) (Aspergillus nidulans).